Consider the following 88-residue polypeptide: Small ribosomal subunit protein bS20 (88 aa).

Residues methionine 1–methionine 27 form a disordered region.

The protein belongs to the bacterial ribosomal protein bS20 family.

Binds directly to 16S ribosomal RNA. The protein is Small ribosomal subunit protein bS20 of Shewanella oneidensis (strain ATCC 700550 / JCM 31522 / CIP 106686 / LMG 19005 / NCIMB 14063 / MR-1).